We begin with the raw amino-acid sequence, 165 residues long: Lipoprotein signal peptidase (165 aa).

Transmembrane regions (helical) follow at residues 9–29, 65–85, and 100–120; these read SFLW…YFVV, WQKY…CYFL, and ALII…GFVV. Active-site residues include aspartate 121 and aspartate 139. A helical membrane pass occupies residues 134–154; the sequence is VFNVADIAISLGAGLMILDAF.

The protein belongs to the peptidase A8 family.

It localises to the cell inner membrane. The enzyme catalyses Release of signal peptides from bacterial membrane prolipoproteins. Hydrolyzes -Xaa-Yaa-Zaa-|-(S,diacylglyceryl)Cys-, in which Xaa is hydrophobic (preferably Leu), and Yaa (Ala or Ser) and Zaa (Gly or Ala) have small, neutral side chains.. It participates in protein modification; lipoprotein biosynthesis (signal peptide cleavage). Its function is as follows. This protein specifically catalyzes the removal of signal peptides from prolipoproteins. In Pasteurella multocida (strain Pm70), this protein is Lipoprotein signal peptidase.